The chain runs to 129 residues: D-ribose pyranase (129 aa).

H20 acts as the Proton donor in catalysis. Substrate contacts are provided by residues D28, H96, and 118 to 120 (YAN).

This sequence belongs to the RbsD / FucU family. RbsD subfamily. As to quaternary structure, homodecamer.

Its subcellular location is the cytoplasm. It carries out the reaction beta-D-ribopyranose = beta-D-ribofuranose. It participates in carbohydrate metabolism; D-ribose degradation; D-ribose 5-phosphate from beta-D-ribopyranose: step 1/2. In terms of biological role, catalyzes the interconversion of beta-pyran and beta-furan forms of D-ribose. This Exiguobacterium sibiricum (strain DSM 17290 / CCUG 55495 / CIP 109462 / JCM 13490 / 255-15) protein is D-ribose pyranase.